A 425-amino-acid polypeptide reads, in one-letter code: Gamma-glutamyl phosphate reductase (425 aa).

It belongs to the gamma-glutamyl phosphate reductase family.

The protein resides in the cytoplasm. It carries out the reaction L-glutamate 5-semialdehyde + phosphate + NADP(+) = L-glutamyl 5-phosphate + NADPH + H(+). Its pathway is amino-acid biosynthesis; L-proline biosynthesis; L-glutamate 5-semialdehyde from L-glutamate: step 2/2. In terms of biological role, catalyzes the NADPH-dependent reduction of L-glutamate 5-phosphate into L-glutamate 5-semialdehyde and phosphate. The product spontaneously undergoes cyclization to form 1-pyrroline-5-carboxylate. This chain is Gamma-glutamyl phosphate reductase, found in Aromatoleum aromaticum (strain DSM 19018 / LMG 30748 / EbN1) (Azoarcus sp. (strain EbN1)).